A 156-amino-acid polypeptide reads, in one-letter code: ATP synthase subunit b (156 aa).

The chain crosses the membrane as a helical span at residues 4-26 (GATFWGPMISFALFVWFTMKYVW).

The protein belongs to the ATPase B chain family. In terms of assembly, F-type ATPases have 2 components, F(1) - the catalytic core - and F(0) - the membrane proton channel. F(1) has five subunits: alpha(3), beta(3), gamma(1), delta(1), epsilon(1). F(0) has three main subunits: a(1), b(2) and c(10-14). The alpha and beta chains form an alternating ring which encloses part of the gamma chain. F(1) is attached to F(0) by a central stalk formed by the gamma and epsilon chains, while a peripheral stalk is formed by the delta and b chains.

It localises to the cell inner membrane. In terms of biological role, f(1)F(0) ATP synthase produces ATP from ADP in the presence of a proton or sodium gradient. F-type ATPases consist of two structural domains, F(1) containing the extramembraneous catalytic core and F(0) containing the membrane proton channel, linked together by a central stalk and a peripheral stalk. During catalysis, ATP synthesis in the catalytic domain of F(1) is coupled via a rotary mechanism of the central stalk subunits to proton translocation. Component of the F(0) channel, it forms part of the peripheral stalk, linking F(1) to F(0). The protein is ATP synthase subunit b of Alkalilimnicola ehrlichii (strain ATCC BAA-1101 / DSM 17681 / MLHE-1).